The following is a 101-amino-acid chain: Urease subunit beta (101 aa).

This sequence belongs to the urease beta subunit family. In terms of assembly, heterotrimer of UreA (gamma), UreB (beta) and UreC (alpha) subunits. Three heterotrimers associate to form the active enzyme.

Its subcellular location is the cytoplasm. The catalysed reaction is urea + 2 H2O + H(+) = hydrogencarbonate + 2 NH4(+). Its pathway is nitrogen metabolism; urea degradation; CO(2) and NH(3) from urea (urease route): step 1/1. This chain is Urease subunit beta, found in Ruegeria sp. (strain TM1040) (Silicibacter sp.).